The sequence spans 304 residues: MWFKNLTLYRFNKPFVVETEALETALADFTFSPCSSQDISKFGFSNALGKKGSSLVHSANNRHLICVTKEEKMLPGQVIKEALEEKVALIEDEENRKLAKKEKDALKDEIITSLLPRAFSRRSQTRALILPELEMILVDSSSATKAEELLALLRKALGSLPVIPLSFKAPVESHLTEWLKNGSAPLPFEMQDEAELKSEADEGGIVRFKQQDLKEDEVLAHLATGKQVHKLALHFGQSIALLLQSDASVKRLKFSEEFRAGNDEVGTDDPMARLDADFALMGSELVALMHALVSALGGLEETQD.

The protein belongs to the RdgC family.

It localises to the cytoplasm. The protein resides in the nucleoid. May be involved in recombination. This Shewanella putrefaciens (strain CN-32 / ATCC BAA-453) protein is Recombination-associated protein RdgC.